A 90-amino-acid chain; its full sequence is Bombyxin B-3 (90 aa).

The N-terminal stretch at 1–20 is a signal peptide; it reads MMKTTIMFMLVVVISLTYSS. Cystine bridges form between C30–C76, C42–C89, and C75–C80. The propeptide at 49–67 is c peptide like; it reads SGAQYAPYFWTRQYLGSRG.

Belongs to the insulin family. Heterodimer of a B chain and an A chain linked by two disulfide bonds.

It localises to the secreted. Brain peptide responsible for activation of prothoracic glands to produce ecdysone in insects. This is Bombyxin B-3 (BBXB3) from Bombyx mori (Silk moth).